We begin with the raw amino-acid sequence, 257 residues long: Transcription factor LBX2 (257 aa).

The disordered stretch occupies residues 1–43 (MTSSSKDMKAGSVLQSSGEERRRGPLDQLPPPANSNKPLTPFS). Residues 1–46 (MTSSSKDMKAGSVLQSSGEERRRGPLDQLPPPANSNKPLTPFSIED) are required for convergent extension movement and hypaxial myogenesis during gastrulation. Required for the formation of thick and thin myofilaments. Required for myod1 expression in the pectoral fin bud. Required for continuous expression of cxcl12a in the posterior lateral mesoderm at the tail bud stage and in adaxial cells at the 10-somite stage. The homeobox DNA-binding region spans 126–185 (RRKSRTAFTNHQIYELEKRFLYQKYLSPADRDQIAQQLGLTNAQVITWFQNRRAKLKRDL). The tract at residues 206-257 (LVSMEDMEDAHGGSGPISPSLSPRAFPQSPSSSRGQTTDEFSEEDEEIEVDD) is disordered. Polar residues predominate over residues 233–243 (QSPSSSRGQTT). The span at 245 to 257 (EFSEEDEEIEVDD) shows a compositional bias: acidic residues.

Interacts (via N-terminus) with tle3a/gro2 (via C-terminus).

The protein localises to the nucleus. Transcription factor required in several developmental processes. Involved in axis formation during embryonic development by inhibiting tle3a/gro2 from binding to tcf7l1a, thereby facilitating ctnnb1-mediated transcription of canonical Wnt/CTNNB1 signaling target genes. Regulates convergent extension movements and hypaxial myogenesis during gastrulation by activating non-canonical Wnt signaling via wnt5b. Required for the formation of myofibrils and fusion of fast muscle precursor cells, potentially via transcriptional regulation of genes specific to thick and thin myofilaments. Regulates the migration of the posterior lateral line primordium during embryonic development, possibly via regulation of cxcl12a/sdf1a expression in the posterior lateral mesoderm, thereby modulating the deposition of neuromasts at correct intervals. The chain is Transcription factor LBX2 from Danio rerio (Zebrafish).